A 355-amino-acid polypeptide reads, in one-letter code: Enhancer of mRNA-decapping protein 1 (355 aa).

Disordered regions lie at residues 1-146 (MSSD…VDGM), 210-230 (MSQP…SQPM), and 301-330 (NSTA…KSSQ). Residues 39–49 (AQKQQLPNGEQ) are compositionally biased toward polar residues. The segment covering 57 to 67 (KQSRKRGSGRQ) has biased composition (basic residues). Residues 91–110 (SIPSGSAGSESAQKETSAGQ) show a composition bias toward polar residues. Low complexity predominate over residues 123-142 (VPAGGPAGKSSSEPASASSA).

The protein belongs to the EDC family.

The protein resides in the cytoplasm. Functionally, mRNA-binding protein which stimulates mRNA decapping. The protein is Enhancer of mRNA-decapping protein 1 (EDC1) of Eremothecium gossypii (strain ATCC 10895 / CBS 109.51 / FGSC 9923 / NRRL Y-1056) (Yeast).